Reading from the N-terminus, the 402-residue chain is C2H2 finger domain transcription factor CON7 (402 aa).

The tract at residues 1 to 247 is disordered; that stretch reads MLASSRQPRH…GAQQHKRPRR (247 aa). Composition is skewed to polar residues over residues 19–49 and 72–86; these read LSSSTLHRSGSPQTGTLRQDATTPTLATSVG and CGDNQSEAQSVTVDT. Residues 87-98 show a composition bias toward low complexity; sequence SSAAQYNASAQQ. 2 stretches are compositionally biased toward polar residues: residues 99 to 116 and 125 to 151; these read EVRSNNPGNYSASATPTS and ARSSSFPDHLQQRSYHPASNHSGSSGD. Residues 256–282 form a C2H2-type zinc finger; the sequence is YKCGWQGCEKAYGTLNHLNAHVTMQSH. The stretch at 289 to 323 forms a coiled coil; the sequence is EEFKEIRKEWKARKKEEEAARKADEERQRQAAQSQ. Residues 302–317 show a composition bias toward basic and acidic residues; it reads KKEEEAARKADEERQR. The tract at residues 302–402 is disordered; the sequence is KKEEEAARKA…GSNQAMYNQR (101 aa). Composition is skewed to polar residues over residues 322–341, 363–373, and 392–402; these read SQGGSTEGQAGSDVSQSSNG, AATSTSVQQQP, and GGSNQAMYNQR.

It is found in the nucleus. Its function is as follows. Transcription factor that plays a central role in appressorium formation and pathogenicity. Required for the expression of a large set of genes including factors that might play a role in membrane metabolism and ergosterol biosynthesis, the chitin-binding protein CBP1,as well as CHS7 that is essential for normal pathogenic development. This is C2H2 finger domain transcription factor CON7 from Pyricularia oryzae (strain 70-15 / ATCC MYA-4617 / FGSC 8958) (Rice blast fungus).